We begin with the raw amino-acid sequence, 234 residues long: Ubiquitin thioesterase OTUB2 (234 aa).

The OTU domain occupies 40 to 231 (TAIRKTKGDG…TSHYNILYAA (192 aa)). Residue aspartate 48 is part of the active site. The active-site Nucleophile is cysteine 51. The active site involves histidine 224.

It belongs to the peptidase C65 family. As to expression, widely expressed. Expressed at higher level in brain.

It catalyses the reaction Thiol-dependent hydrolysis of ester, thioester, amide, peptide and isopeptide bonds formed by the C-terminal Gly of ubiquitin (a 76-residue protein attached to proteins as an intracellular targeting signal).. Hydrolase that can remove conjugated ubiquitin from proteins in vitro and may therefore play an important regulatory role at the level of protein turnover by preventing degradation. Mediates deubiquitination of 'Lys-11'-,'Lys-48'- and 'Lys-63'-linked polyubiquitin chains, with a preference for 'Lys-63'-linked polyubiquitin chains. The chain is Ubiquitin thioesterase OTUB2 (OTUB2) from Homo sapiens (Human).